A 1574-amino-acid chain; its full sequence is Sterol 3-beta-glucosyltransferase (1574 aa).

Polar residues predominate over residues 37–48 (TFLNQNPASPNN). Disordered regions lie at residues 37–61 (TFLN…NKDE) and 102–170 (ASNA…HSKL). 2 stretches are compositionally biased toward basic and acidic residues: residues 107–121 (EAKD…RSSR) and 128–138 (PEYRREYKLDY). The span at 139 to 148 (DIDESEEDDI) shows a compositional bias: acidic residues. Residues 149-170 (ESTRDENTLKPKTEDTSVHSKL) are compositionally biased toward basic and acidic residues. Residues 253–288 (DKLKRVFELNDDDYFYGNYNVWLVRDVLLQGHIYLT) enclose the GRAM 1 domain. The PH domain occupies 323–471 (DVIQSGSLGM…WVNNIVKVVF (149 aa)). Disordered regions lie at residues 389–413 (GRND…SGDE), 538–559 (RMKK…GNEP), 651–722 (ASHR…PVQG), and 774–806 (DALS…KKKN). Residues 692 to 701 (ITPSKIFSNK) are compositionally biased toward polar residues. The segment covering 702–711 (SRTESEKSTP) has biased composition (basic and acidic residues). The segment covering 712-722 (DRSQTTSPVQG) has biased composition (polar residues). One can recognise a GRAM 2 domain in the interval 854–920 (RHFQERFSFN…IDVDTCSKEK (67 aa)). A compositionally biased stretch (basic and acidic residues) spans 964–976 (RESGNESSDDNKS). A disordered region spans residues 964 to 996 (RESGNESSDDNKSAQHGKSGCFQKTPSSAETTK). A compositionally biased stretch (polar residues) spans 985 to 996 (FQKTPSSAETTK). Ser1057, Arg1058, Asp1060, Asn1333, Ile1364, His1366, His1379, Ser1382, Gly1383, Thr1384, Asp1403, and Gln1404 together coordinate UDP-alpha-D-glucose. Residues 1505 to 1574 (DSDTYDADHD…DNTTVTDANK (70 aa)) form a disordered region. Positions 1510–1533 (DADHDSDKESDHDQTYEQDNHSDY) are enriched in basic and acidic residues. A compositionally biased stretch (polar residues) spans 1563–1574 (GNDNTTVTDANK).

Belongs to the glycosyltransferase 28 family.

It is found in the cytoplasm. Its subcellular location is the membrane. The enzyme catalyses a sterol + UDP-alpha-D-glucose = a sterol 3-beta-D-glucoside + UDP + H(+). It catalyses the reaction ergosterol + UDP-alpha-D-glucose = ergosteryl 3-beta-D-glucoside + UDP + H(+). Functionally, sterol glycosyltransferase responsible for the glycosylation of ergosterol to form ergosterol-glucoside. This is Sterol 3-beta-glucosyltransferase from Debaryomyces hansenii (strain ATCC 36239 / CBS 767 / BCRC 21394 / JCM 1990 / NBRC 0083 / IGC 2968) (Yeast).